Consider the following 565-residue polypeptide: Zinc finger protein 143 (565 aa).

7 consecutive C2H2-type zinc fingers follow at residues 230–254 (FRCDYEGCGKLYTTAHHLKVHERSH), 260–284 (YQCDHGSCRKAFATGYGLKSHVRTH), 290–314 (YRCSEENCTKSFKTSGDLQKHVRTH), 320–344 (FKCPFEGCGRSFTTSNIRKVHIRTH), 350–374 (YYCSEPGCGRAFASATNYKNHVRIH), 380–404 (YVCTVPGCDKRFTEYSSLYKHHVVH), and 410–433 (YNCNHCGKTYKQISTLAMHKRTAH).

This sequence belongs to the GLI C2H2-type zinc-finger protein family.

It localises to the nucleus. Transcriptional activator. Activates the gene for selenocysteine tRNA (tRNAsec). Binds to the activator element (AE) motif of the selenocysteine tRNA gene promoter. The sequence is that of Zinc finger protein 143 (znf143) from Xenopus laevis (African clawed frog).